Consider the following 39-residue polypeptide: Phospholipase A2 (39 aa).

Tryptophan 10, glycine 12, and glycine 14 together coordinate Ca(2+). Cysteine 11 and cysteine 33 are disulfide-bonded. The active site involves histidine 36. Aspartate 37 contacts Ca(2+).

The cofactor is Ca(2+). As to expression, expressed uniformly in tentacles (at protein level).

It is found in the secreted. The protein resides in the nematocyst. It catalyses the reaction a 1,2-diacyl-sn-glycero-3-phosphocholine + H2O = a 1-acyl-sn-glycero-3-phosphocholine + a fatty acid + H(+). Its activity is regulated as follows. Inhibited by morin and p-BPB. Functionally, PA2 catalyzes the calcium-dependent hydrolysis of the 2-acyl groups in 3-sn-phosphoglycerides. Induces insulin secretion in isolated rat islets under high glucose concentration conditions, but not under low glucose concentration conditions. Increases perfusion pressure, renal vascular resistance, urinary flow, glomerular filtration rate, and potassium, sodium, and chloride excretion levels in rat kidney. Does not increase perfusion pressure in the rat mesenteric vascular bed. The protein is Phospholipase A2 of Bunodosoma caissarum (Sea anemone).